A 263-amino-acid chain; its full sequence is MRDQAPLIHPTAVIDPAARLASDVRVGAFSLIGADVEIGAGTEVGPHCSIHGPTRIGSNNRFIGHAAIGGEPQDKKYAGERTELVIGNGNVIREFVTINRGTGGGGGITVVGDDNWMLAYTHVAHDCHVGNHCVFSNNTTLAGHVTVGDYVIISGFAGAHQFCRIGAHAFLGMGALTNGDVPPFTMVGSDSLGRPRGINSEGLKRRGFDAERISAIKRAYRTLYVAGLPLAEAKLQLAEQARDSDDVRGLLEFIEAAERPLLR.

The protein belongs to the transferase hexapeptide repeat family. LpxA subfamily. In terms of assembly, homotrimer.

The protein resides in the cytoplasm. It catalyses the reaction a (3R)-hydroxyacyl-[ACP] + UDP-N-acetyl-alpha-D-glucosamine = a UDP-3-O-[(3R)-3-hydroxyacyl]-N-acetyl-alpha-D-glucosamine + holo-[ACP]. Its pathway is glycolipid biosynthesis; lipid IV(A) biosynthesis; lipid IV(A) from (3R)-3-hydroxytetradecanoyl-[acyl-carrier-protein] and UDP-N-acetyl-alpha-D-glucosamine: step 1/6. In terms of biological role, involved in the biosynthesis of lipid A, a phosphorylated glycolipid that anchors the lipopolysaccharide to the outer membrane of the cell. This is Acyl-[acyl-carrier-protein]--UDP-N-acetylglucosamine O-acyltransferase from Xanthomonas campestris pv. campestris (strain 8004).